A 175-amino-acid polypeptide reads, in one-letter code: ADP-ribose 1''-phosphate phosphatase (175 aa).

One can recognise a Macro domain in the interval 1-175 (MSKLNYIKGD…HQVLINVYVI (175 aa)). Substrate contacts are provided by residues 9–11 (GDL), 25–27 (ACN), 32–37 (WGAGVA), and 147–153 (INAGLFN).

This sequence belongs to the POA1 family.

It carries out the reaction ADP-alpha-D-ribose 1''-phosphate + H2O = ADP-D-ribose + phosphate. Its function is as follows. Highly specific phosphatase involved in the metabolism of ADP-ribose 1''-phosphate (Appr1p) which is produced as a consequence of tRNA splicing. The chain is ADP-ribose 1''-phosphate phosphatase (POA1) from Meyerozyma guilliermondii (strain ATCC 6260 / CBS 566 / DSM 6381 / JCM 1539 / NBRC 10279 / NRRL Y-324) (Yeast).